The chain runs to 370 residues: Acyl-CoA:lysophosphatidylglycerol acyltransferase 1 (370 aa).

The chain crosses the membrane as a helical span at residues 22 to 42; sequence FAFMVANNLVAIPSYICYVII. The short motif at 101–106 is the HXXXXD motif element; it reads HQATGD. The helical transmembrane segment at 342-362 threads the bilayer; the sequence is MWIFLIQSFAFLSGYLWYHII.

Belongs to the 1-acyl-sn-glycerol-3-phosphate acyltransferase family. Ubiquitous. Expressed in heart, kidney, liver, skin, intestine, and thymus. Highest expression is detected in brain and testis.

The protein localises to the endoplasmic reticulum membrane. The enzyme catalyses a 2-acyl-sn-glycero-3-phosphoethanolamine + octadecanoyl-CoA = 1-octadecanoyl-2-acyl-sn-glycero-3-phosphoethanolamine + CoA. It catalyses the reaction 2-(9Z-octadecenoyl)-sn-glycero-3-phosphoethanolamine + octadecanoyl-CoA = 1-octadecanoyl-2-(9Z-octadecenoyl)-sn-glycero-3-phosphoethanolamine + CoA. The catalysed reaction is a 2-acyl-sn-glycero-3-phosphoethanolamine + hexadecanoyl-CoA = 1-hexadecanoyl-2-acyl-sn-glycero-3-phosphoethanolamine + CoA. It carries out the reaction 2-(9Z-octadecenoyl)-sn-glycero-3-phosphoethanolamine + hexadecanoyl-CoA = 1-hexadecanoyl-2-(9Z-octadecenoyl)-sn-glycero-3-phosphoethanolamine + CoA. The enzyme catalyses 1-tetradecanoyl-sn-glycero-3-phospho-(1'-sn-glycerol) + hexadecanoyl-CoA = 1-tetradecanoyl-2-hexadecanoyl-sn-glycero-3-phospho-(1'-sn-glycerol) + CoA. It catalyses the reaction 1-hexadecanoyl-sn-glycero-3-phospho-(1'-sn-glycerol) + dodecanoyl-CoA = 1-hexadecanoyl-2-dodecanoyl-sn-glycero-3-phospho-(1'-sn-glycerol) + CoA. The catalysed reaction is 1-hexadecanoyl-sn-glycero-3-phospho-(1'-sn-glycerol) + hexadecanoyl-CoA = 1,2-dihexadecanoyl-sn-glycero-3-phospho-(1'-sn-glycerol) + CoA. It carries out the reaction 1-hexadecanoyl-sn-glycero-3-phospho-(1'-sn-glycerol) + octadecanoyl-CoA = 1-hexadecanoyl-2-octadecanoyl-sn-glycero-3-phospho-(1'-sn-glycerol) + CoA. The enzyme catalyses 1-octadecanoyl-sn-glycero-3-phospho-(1'-sn-glycerol) + hexadecanoyl-CoA = 1-octadecanoyl-2-hexadecanoyl-sn-glycero-3-phospho-(1'-sn-glycerol) + CoA. It catalyses the reaction 1-(9Z-octadecenoyl)-sn-glycero-3-phospho-(1'-sn-glycerol) + dodecanoyl-CoA = 1-(9Z-octadecenoyl)-2-dodecanoyl-sn-glycero-3-phospho-(1'-sn-glycerol) + CoA. The catalysed reaction is 1-hexadecanoyl-sn-glycero-3-phospho-(1'-sn-glycerol) + (9Z)-octadecenoyl-CoA = 1-hexadecanoyl-2-(9Z-octadecenoyl)-sn-glycero-3-phospho-(1'-sn-glycerol) + CoA. It carries out the reaction 1-(9Z-octadecenoyl)-sn-glycero-3-phospho-(1'-sn-glycerol) + hexadecanoyl-CoA = 1-(9Z-octadecenoyl)-2-hexadecanoyl-sn-glycero-3-phospho-(1'-sn-glycerol) + CoA. The enzyme catalyses 1-(9Z-octadecenoyl)-sn-glycero-3-phospho-(1'-sn-glycerol) + (9Z)-octadecenoyl-CoA = 1,2-di-(9Z-octadecenoyl)-sn-glycero-3-phospho-(1'-sn-glycerol) + CoA. It catalyses the reaction a 2-acylglycerol + an acyl-CoA = a 1,2-diacylglycerol + CoA. The catalysed reaction is a 2-acylglycerol + hexadecanoyl-CoA = a 1-hexadecanoyl-2-acylglycerol + CoA. It carries out the reaction a 1-acylglycerol + hexadecanoyl-CoA = an hexadecanoyl-acylglycerol + CoA. The enzyme catalyses a 2-acyl-sn-glycero-3-phosphocholine + an acyl-CoA = a 1,2-diacyl-sn-glycero-3-phosphocholine + CoA. It catalyses the reaction 2-(9Z-octadecenoyl)-sn-glycero-3-phosphocholine + octadecanoyl-CoA = 1-octadecanoyl-2-(9Z-octadecenoyl)-sn-glycero-3-phosphocholine + CoA. The catalysed reaction is 2-(9Z,12Z-octadecadienoyl)-sn-glycero-3-phosphocholine + octadecanoyl-CoA = 1-octadecanoyl-2-(9Z,12Z)-octadecadienoyl-sn-glycero-3-phosphocholine + CoA. It carries out the reaction 2-(5Z,8Z,11Z,14Z)-eicosatetraenoyl-sn-glycero-3-phosphocholine + octadecanoyl-CoA = 1-octadecanoyl-2-(5Z,8Z,11Z,14Z-eicosatetraenoyl)-sn-glycero-3-phosphocholine + CoA. The enzyme catalyses 2-(9Z-octadecenoyl)-sn-glycero-3-phosphocholine + hexadecanoyl-CoA = 1-hexadecanoyl-2-(9Z-octadecenoyl)-sn-glycero-3-phosphocholine + CoA. It catalyses the reaction 2-(9Z-octadecenoyl)-sn-glycero-3-phospho-L-serine + hexadecanoyl-CoA = 1-hexadecanoyl-2-(9Z-octadecenoyl)-sn-glycero-3-phospho-L-serine + CoA. The catalysed reaction is 2-(4Z,7Z,10Z,13Z,16Z,19Z-docosahexaenoyl)-sn-glycero-3-phosphocholine + octadecanoyl-CoA = 1-octadecanoyl-2-(4Z,7Z,10Z,13Z,16Z,19Z-docosahexaenoyl)-sn-glycero-3-phosphocholine + CoA. It carries out the reaction 1-(9Z-octadecenoyl)-sn-glycero-3-phospho-L-serine + octadecanoyl-CoA = 1-(9Z-octadecenoyl)-2-octadecanoyl-sn-glycero-3-phospho-L-serine + CoA. The enzyme catalyses a 2-acyl-sn-glycero-3-phosphoethanolamine + a fatty acyl-CoA = a 1,2-diacyl-sn-glycero-3-phosphoethanolamine + CoA. Lysophospholipid acyltransferase involved in fatty acyl chain remodeling of glycerophospholipids in the endoplasmic reticulum membrane. Selectively catalyzes the transfer and esterification of saturated long-chain fatty acids from acyl-CoA to the sn-1 position of 1-lyso-2-acyl phosphatidylethanolamines (1-lyso-PE, LPE), with a preference for stearoyl CoA over palmitoyl CoA as acyl donor. Acts in concert with an unknown phospholipase A1 to convert palmitate PE species into stearate ones. Provides substrates to the PE methylation pathway, controlling stearate/palmitate composition of PE and phosphatidylcholine (PC) species with an overall impact on de novo hepatic lipid synthesis, body fat content and life span. Can acylate lysophosphatidylglycerols (LPG) using various saturated fatty acyl-CoAs as acyl donors. Can also acylate monoacylglycerols with a preference for 2-monoacylglycerols over 1-monoacylglycerols. Has no activity toward lysophosphatidic acids (LPA) and lysophosphatidylcholines (LPC). The chain is Acyl-CoA:lysophosphatidylglycerol acyltransferase 1 from Mus musculus (Mouse).